We begin with the raw amino-acid sequence, 79 residues long: uncharacterized protein (79 aa).

An N-terminal signal peptide occupies residues 1–24 (MNKFLNLIGLAFVLVLCAFSCSNA). The LysM domain maps to 32 to 78 (SWHVAQKGYTCYDMATSCKVTLDQFMRTNKLDNNACKLVQIGRKYCC).

It localises to the secreted. This is an uncharacterized protein from Dictyostelium discoideum (Social amoeba).